Here is a 215-residue protein sequence, read N- to C-terminus: Large ribosomal subunit protein uL4 (215 aa).

Residues 43 to 101 (HQRQGTSKTKERGEVRGSGRKLYRQKGTGNARVGDAQSPIRRGGGRAHGARPRDYAHDL) form a disordered region. The span at 50–59 (KTKERGEVRG) shows a compositional bias: basic and acidic residues.

It belongs to the universal ribosomal protein uL4 family. Part of the 50S ribosomal subunit.

Functionally, one of the primary rRNA binding proteins, this protein initially binds near the 5'-end of the 23S rRNA. It is important during the early stages of 50S assembly. It makes multiple contacts with different domains of the 23S rRNA in the assembled 50S subunit and ribosome. Forms part of the polypeptide exit tunnel. The chain is Large ribosomal subunit protein uL4 from Salinibacter ruber (strain DSM 13855 / M31).